The primary structure comprises 241 residues: uncharacterized protein (241 aa).

This is an uncharacterized protein from Saccharolobus islandicus (Sulfolobus islandicus).